The following is a 418-amino-acid chain: Light-independent protochlorophyllide reductase subunit N (418 aa).

The [4Fe-4S] cluster site is built by Cys17, Cys42, and Cys103.

It belongs to the BchN/ChlN family. Protochlorophyllide reductase is composed of three subunits; ChlL, ChlN and ChlB. Forms a heterotetramer of two ChlB and two ChlN subunits. The cofactor is [4Fe-4S] cluster.

The catalysed reaction is chlorophyllide a + oxidized 2[4Fe-4S]-[ferredoxin] + 2 ADP + 2 phosphate = protochlorophyllide a + reduced 2[4Fe-4S]-[ferredoxin] + 2 ATP + 2 H2O. It functions in the pathway porphyrin-containing compound metabolism; chlorophyll biosynthesis (light-independent). Functionally, component of the dark-operative protochlorophyllide reductase (DPOR) that uses Mg-ATP and reduced ferredoxin to reduce ring D of protochlorophyllide (Pchlide) to form chlorophyllide a (Chlide). This reaction is light-independent. The NB-protein (ChlN-ChlB) is the catalytic component of the complex. This Prochlorococcus marinus (strain SARG / CCMP1375 / SS120) protein is Light-independent protochlorophyllide reductase subunit N.